The sequence spans 675 residues: Heat shock 70 kDa protein, mitochondrial (675 aa).

A mitochondrion-targeting transit peptide spans 1–51; that stretch reads MAAVLRSLRRRDVASATFSAYRSLTGSTKPAYVAQKWSCLARPFSSRPAGN. A disordered region spans residues 638–675; that stretch reads VSKIGEHMSGGSSGGSSAGGSQGGGDQAPEAEYEEVKK. Gly residues predominate over residues 648–663; that stretch reads GSSGGSSAGGSQGGGD. Residues 666–675 show a composition bias toward acidic residues; sequence PEAEYEEVKK.

Belongs to the heat shock protein 70 family.

It is found in the mitochondrion. This is Heat shock 70 kDa protein, mitochondrial from Phaseolus vulgaris (Kidney bean).